The following is a 633-amino-acid chain: Endosomal/prevacuolar sodium/hydrogen exchanger (633 aa).

Residues M1–A21 form the signal peptide. Residues V22–S61 are Lumenal-facing. Residues D25–A44 form a disordered region. The span at L31–P42 shows a compositional bias: low complexity. Residues W62–T82 form a helical membrane-spanning segment. At Q83–R85 the chain is on the cytoplasmic side. Residues I86 to I106 traverse the membrane as a helical segment. Over R107–T117 the chain is Lumenal. Residues V118 to G138 traverse the membrane as a helical segment. The short motif at Y124–I133 is the Amiloride-binding element. Over Y139–S152 the chain is Cytoplasmic. The chain crosses the membrane as a helical span at residues I153–Y173. Residues I174–D189 lie on the Lumenal side of the membrane. Residues A190–A211 traverse the membrane as a helical segment. The Cytoplasmic segment spans residues Y212–K217. The helical transmembrane segment at L218–E238 threads the bilayer. The Lumenal segment spans residues T239 to G258. Residues L259 to A279 form a helical membrane-spanning segment. At L280–R288 the chain is on the cytoplasmic side. A helical membrane pass occupies residues R289 to F308. Residues S309–H313 lie on the Lumenal side of the membrane. Residues M314–Y333 traverse the membrane as a helical segment. Over N334–K344 the chain is Cytoplasmic. The helical transmembrane segment at Y345–L364 threads the bilayer. Topologically, residues E365–P376 are cytoplasmic. Residues L377–L397 traverse the membrane as a helical segment. Over S398 to Y431 the chain is Lumenal. N420 carries N-linked (GlcNAc...) asparagine glycosylation. The helical transmembrane segment at Q432 to I452 threads the bilayer. At Q453–K457 the chain is on the cytoplasmic side. A helical membrane pass occupies residues F458–T478. Position 490 is a phosphothreonine (T490). S494 is subject to Phosphoserine. At T498 the chain carries Phosphothreonine. S499 bears the Phosphoserine mark. 3 N-linked (GlcNAc...) asparagine glycosylation sites follow: N515, N550, and N563. A disordered region spans residues T553–D578. Over residues E564–R574 the composition is skewed to polar residues. S569 is subject to Phosphoserine.

It belongs to the monovalent cation:proton antiporter 1 (CPA1) transporter (TC 2.A.36) family. As to quaternary structure, interacts with CYP6.

Its subcellular location is the endosome membrane. It localises to the prevacuolar compartment membrane. In terms of biological role, endosomal/prevacuolar electroneutral Na(+)/H(+) exchanger which mediates intracellular sequestration of Na(+) cations, regulates vacuolar pH and contributes to osmotolerance following sudden exposure to hyperosmotic media. Also contributes to the postdiauxic/stationary phase resistance to osmotic stress and allows for the continued growth of cells until the acquired osmotolerance response can occur. Involved in hygromycin resistance probably through its influence on the electrochemical proton gradient affecting secondarily the entrance of hygromycin. Mediates pH-dependent vesicle trafficking out of the endosome. Contributes to K(+) sequestration and homeostasis. The chain is Endosomal/prevacuolar sodium/hydrogen exchanger (NHX1) from Saccharomyces cerevisiae (strain ATCC 204508 / S288c) (Baker's yeast).